The chain runs to 210 residues: HTH-type transcriptional repressor FabR (210 aa).

The HTH tetR-type domain maps to 10-70 (KTRRSLVEAA…TMVDESGLML (61 aa)). The segment at residues 33–52 (SLREVAREAGIAPTSFYRHF) is a DNA-binding region (H-T-H motif).

In terms of assembly, homodimer.

It localises to the cytoplasm. Its function is as follows. Represses the transcription of fabB, involved in unsaturated fatty acid (UFA) biosynthesis. By controlling UFA production, FabR directly influences the physical properties of the membrane bilayer. This is HTH-type transcriptional repressor FabR from Klebsiella pneumoniae subsp. pneumoniae (strain ATCC 700721 / MGH 78578).